Here is a 172-residue protein sequence, read N- to C-terminus: R-phycocyanin-2 beta chain (172 aa).

N72 bears the N4-methylasparagine mark. Residue C82 coordinates (2R,3E)-phycocyanobilin. C153 lines the (2R,3E)-phycoerythrobilin pocket.

Belongs to the phycobiliprotein family. Heterodimer of an alpha and a beta chain. Contains two covalently linked bilin chromophores.

It is found in the cellular thylakoid membrane. Functionally, light-harvesting photosynthetic bile pigment-protein from the phycobiliprotein complex. The sequence is that of R-phycocyanin-2 beta chain (rpcB) from Synechococcus sp. (strain WH8020).